Consider the following 287-residue polypeptide: uncharacterized protein (287 aa).

Transmembrane regions (helical) follow at residues 27-47, 66-86, 97-117, 135-155, 171-191, 205-225, and 254-274; these read LTFS…FGVQ, LGTI…VTAF, WFWG…GVLL, IVFA…LSAL, IFIW…VLNF, LFPG…VYFV, and SALF…YFIL.

It is found in the cell membrane. This is an uncharacterized protein from Mycoplasma pneumoniae (strain ATCC 29342 / M129 / Subtype 1) (Mycoplasmoides pneumoniae).